Consider the following 85-residue polypeptide: Putative membrane protein insertion efficiency factor (85 aa).

This sequence belongs to the UPF0161 family.

Its subcellular location is the cell inner membrane. Its function is as follows. Could be involved in insertion of integral membrane proteins into the membrane. The chain is Putative membrane protein insertion efficiency factor from Fervidobacterium nodosum (strain ATCC 35602 / DSM 5306 / Rt17-B1).